The primary structure comprises 465 residues: Tetratricopeptide repeat protein 38 (465 aa).

3 TPR repeats span residues 104-137 (REQL…HPTD), 176-209 (SYVK…EPTD), and 248-281 (CHNY…SLQA).

It belongs to the TTC38 family.

This Mus musculus (Mouse) protein is Tetratricopeptide repeat protein 38 (Ttc38).